The sequence spans 448 residues: Potassium/proton antiporter CemA (448 aa).

4 helical membrane passes run 47–67, 213–233, 314–334, and 395–415; these read IVFY…LSLL, LSSL…STLF, IISH…LFVA, and IISC…KYLI.

It belongs to the CemA family.

The protein localises to the plastid membrane. It carries out the reaction K(+)(in) + H(+)(out) = K(+)(out) + H(+)(in). Its function is as follows. May be involved in proton extrusion. The protein is Potassium/proton antiporter CemA of Aneura mirabilis (Parasitic liverwort).